A 571-amino-acid chain; its full sequence is Proline--tRNA ligase (571 aa).

This sequence belongs to the class-II aminoacyl-tRNA synthetase family. ProS type 1 subfamily. Homodimer.

It localises to the cytoplasm. The enzyme catalyses tRNA(Pro) + L-proline + ATP = L-prolyl-tRNA(Pro) + AMP + diphosphate. In terms of biological role, catalyzes the attachment of proline to tRNA(Pro) in a two-step reaction: proline is first activated by ATP to form Pro-AMP and then transferred to the acceptor end of tRNA(Pro). As ProRS can inadvertently accommodate and process non-cognate amino acids such as alanine and cysteine, to avoid such errors it has two additional distinct editing activities against alanine. One activity is designated as 'pretransfer' editing and involves the tRNA(Pro)-independent hydrolysis of activated Ala-AMP. The other activity is designated 'posttransfer' editing and involves deacylation of mischarged Ala-tRNA(Pro). The misacylated Cys-tRNA(Pro) is not edited by ProRS. This Glaesserella parasuis serovar 5 (strain SH0165) (Haemophilus parasuis) protein is Proline--tRNA ligase.